A 327-amino-acid chain; its full sequence is MSGERAKRFPLALEDLKREPRKPEGRAAERQAAGDAARQRLIAAAAAAPAAASPIAPERLAPRAAGASGSGVPVAKPARAKPPTTPGVAKSAPSSGVKNGDKSATPNVALSGALALTSERVRERMVERLRANGVADPRVLAAMSAVPRHMFVDPGLAAQAYEDAALPIGHQQTISKPSVVARMIELAAAGRTLERVLEIGTGCGYQAAVLSRVARDVYSIERVKPLYERAKLNLRPLRVPNIRLHYGDGRVGLPAAAPFDAIVIAAAGLDVPRALLEQLAIGGRLVAPVGEQAGEQVLTLVERVAPAQWRESRLDRVFFVPLKSGVI.

2 disordered regions span residues 1–38 (MSGERAKRFPLALEDLKREPRKPEGRAAERQAAGDAAR) and 62–105 (PRAA…KSAT). The segment covering 14-29 (EDLKREPRKPEGRAAE) has biased composition (basic and acidic residues). Residues 62 to 77 (PRAAGASGSGVPVAKP) are compositionally biased toward low complexity. Residues 92-105 (APSSGVKNGDKSAT) show a composition bias toward polar residues. Residue S175 is part of the active site.

The protein belongs to the methyltransferase superfamily. L-isoaspartyl/D-aspartyl protein methyltransferase family.

The protein resides in the cytoplasm. It carries out the reaction [protein]-L-isoaspartate + S-adenosyl-L-methionine = [protein]-L-isoaspartate alpha-methyl ester + S-adenosyl-L-homocysteine. In terms of biological role, catalyzes the methyl esterification of L-isoaspartyl residues in peptides and proteins that result from spontaneous decomposition of normal L-aspartyl and L-asparaginyl residues. It plays a role in the repair and/or degradation of damaged proteins. The sequence is that of Protein-L-isoaspartate O-methyltransferase from Burkholderia thailandensis (strain ATCC 700388 / DSM 13276 / CCUG 48851 / CIP 106301 / E264).